We begin with the raw amino-acid sequence, 311 residues long: MELENQTRVTKFILVGFPGSLSMRAAMFLIFLVAYILTVAENVIIILLVLQNRPLHKPMYFFLANLSFLETWYISVTVPKLLFSFWSVNNSISFTLCMIQLYFFIALMCTECVLLAAMAYDRYVAICRPLHYPTIMSHGLCFRLALGSWAIGFGISLAKIYFISCLSFCGPNVINHFFCDISPVLNLSCTDMSITELVDFILALVIFLFPLFITVLSYGCILATILCMPTGKQKAFSTCASHLVVVTIFYSAIIFMYARPRVIHAFNMNKIISIFYAIVTPSLNPFIYCLRNREVKEALKKLAYCQASRSD.

The Extracellular portion of the chain corresponds to 1 to 25 (MELENQTRVTKFILVGFPGSLSMRA). Asn-5 carries an N-linked (GlcNAc...) asparagine glycan. A helical membrane pass occupies residues 26–46 (AMFLIFLVAYILTVAENVIII). Residues 47 to 54 (LLVLQNRP) are Cytoplasmic-facing. A helical transmembrane segment spans residues 55–75 (LHKPMYFFLANLSFLETWYIS). The Extracellular segment spans residues 76 to 99 (VTVPKLLFSFWSVNNSISFTLCMI). A disulfide bridge links Cys-97 with Cys-189. Residues 100 to 120 (QLYFFIALMCTECVLLAAMAY) traverse the membrane as a helical segment. Topologically, residues 121–139 (DRYVAICRPLHYPTIMSHG) are cytoplasmic. The helical transmembrane segment at 140–160 (LCFRLALGSWAIGFGISLAKI) threads the bilayer. Over 161–196 (YFISCLSFCGPNVINHFFCDISPVLNLSCTDMSITE) the chain is Extracellular. The chain crosses the membrane as a helical span at residues 197–217 (LVDFILALVIFLFPLFITVLS). Over 218–235 (YGCILATILCMPTGKQKA) the chain is Cytoplasmic. A helical transmembrane segment spans residues 236-256 (FSTCASHLVVVTIFYSAIIFM). Topologically, residues 257 to 269 (YARPRVIHAFNMN) are extracellular. Residues 270-290 (KIISIFYAIVTPSLNPFIYCL) traverse the membrane as a helical segment. Residues 291 to 311 (RNREVKEALKKLAYCQASRSD) are Cytoplasmic-facing.

The protein belongs to the G-protein coupled receptor 1 family.

The protein localises to the cell membrane. Functionally, odorant receptor. The polypeptide is Olfactory receptor 6B1 (OR6B1) (Homo sapiens (Human)).